A 194-amino-acid polypeptide reads, in one-letter code: Protein GrpE (194 aa).

Basic and acidic residues-rich tracts occupy residues 1-19 (MSKE…ENTS) and 26-44 (KKEA…NQKL). Residues 1–44 (MSKEEFPSEKNLDKEENTSKPKKAVKKEAAKGEETKKNNENQKL) form a disordered region.

This sequence belongs to the GrpE family. In terms of assembly, homodimer.

Its subcellular location is the cytoplasm. Functionally, participates actively in the response to hyperosmotic and heat shock by preventing the aggregation of stress-denatured proteins, in association with DnaK and GrpE. It is the nucleotide exchange factor for DnaK and may function as a thermosensor. Unfolded proteins bind initially to DnaJ; upon interaction with the DnaJ-bound protein, DnaK hydrolyzes its bound ATP, resulting in the formation of a stable complex. GrpE releases ADP from DnaK; ATP binding to DnaK triggers the release of the substrate protein, thus completing the reaction cycle. Several rounds of ATP-dependent interactions between DnaJ, DnaK and GrpE are required for fully efficient folding. This Lactobacillus acidophilus (strain ATCC 700396 / NCK56 / N2 / NCFM) protein is Protein GrpE.